We begin with the raw amino-acid sequence, 362 residues long: Peptide chain release factor 1 (362 aa).

N5-methylglutamine is present on Q237.

This sequence belongs to the prokaryotic/mitochondrial release factor family. Post-translationally, methylated by PrmC. Methylation increases the termination efficiency of RF1.

It is found in the cytoplasm. Peptide chain release factor 1 directs the termination of translation in response to the peptide chain termination codons UAG and UAA. The polypeptide is Peptide chain release factor 1 (prfA) (Aquifex aeolicus (strain VF5)).